Reading from the N-terminus, the 977-residue chain is Synaptopodin 2-like protein (977 aa).

Residues 6-88 (EVLVTLSGGA…QLVLTVQRLA (83 aa)) form the PDZ domain. 3 disordered regions span residues 91 to 226 (GPVQ…GPLR), 317 to 352 (AGTG…QSDW), and 364 to 677 (AGSR…EDAL). Phosphoserine occurs at positions 108 and 111. Pro residues predominate over residues 109–123 (PLSPEPPGAPVPQPL). The residue at position 141 (threonine 141) is a Phosphothreonine. 3 positions are modified to phosphoserine: serine 143, serine 178, and serine 180. Residues 183-192 (EPAPTIPGPP) are compositionally biased toward pro residues. A compositionally biased stretch (polar residues) spans 194-203 (QGDSRVSSPS). The span at 216-226 (EALLLPHGPLR) shows a compositional bias: low complexity. Residues serine 345, serine 350, serine 374, serine 381, and serine 384 each carry the phosphoserine modification. Omega-N-methylarginine is present on arginine 386. The segment covering 436-450 (PPSPLPAPVASPRPF) has biased composition (pro residues). Residues arginine 466, arginine 469, and arginine 479 each carry the omega-N-methylarginine modification. Residues 510 to 525 (LSSQGPTPLPSFTSGV) show a composition bias toward polar residues. Composition is skewed to low complexity over residues 530 to 545 (PVSG…GPVT) and 572 to 595 (SAAA…ARPE). A compositionally biased stretch (pro residues) spans 596–607 (APAPGPGAPEPP). Phosphoserine is present on residues serine 670 and serine 678. Residues 697 to 802 (TLPHVTPKTP…PSLPPSWKYS (106 aa)) are disordered. Over residues 704 to 730 (KTPPPMAPKTPPPMTPKTPPPVAPKPP) the composition is skewed to pro residues. Threonine 705 and threonine 713 each carry phosphothreonine. Position 757 is an omega-N-methylarginine (arginine 757). The segment covering 781–796 (GLGPRPRSPSPTPSLP) has biased composition (pro residues). Serine 788 and serine 790 each carry phosphoserine. Phosphothreonine is present on threonine 792. Omega-N-methylarginine is present on residues arginine 806, arginine 826, and arginine 889. Serine 891 is modified (phosphoserine). 2 positions are modified to phosphothreonine: threonine 892 and threonine 898. Omega-N-methylarginine is present on arginine 910. The residue at position 921 (arginine 921) is an Asymmetric dimethylarginine; alternate. At arginine 921 the chain carries Omega-N-methylarginine; alternate. Residues 922–950 (TELASAPVPSPAPPPEAPRGLGASPSSCG) form a disordered region. The span at 929–938 (VPSPAPPPEA) shows a compositional bias: pro residues. Residues arginine 955 and arginine 957 each carry the omega-N-methylarginine modification.

Belongs to the synaptopodin family.

The protein localises to the cytoplasm. It is found in the cytoskeleton. Actin-associated protein that may play a role in modulating actin-based shape. In Homo sapiens (Human), this protein is Synaptopodin 2-like protein (SYNPO2L).